We begin with the raw amino-acid sequence, 512 residues long: Peroxisomal N(1)-acetyl-spermine/spermidine oxidase (512 aa).

The residue at position 1 (Met1) is an N-acetylmethionine. The propeptide occupies Met1–Arg6. FAD is bound by residues Ala25, Glu46, Arg54, and His70–Trp71. The substrate site is built by His73 and Val195. Val248 provides a ligand contact to FAD. Residue Asn321 participates in substrate binding. FAD is bound by residues Glu473 and Thr482–Thr483. The Microbody targeting signal motif lies at Pro510–Leu512.

This sequence belongs to the flavin monoamine oxidase family. Monomer. FAD is required as a cofactor.

The protein resides in the peroxisome. It is found in the cytoplasm. It catalyses the reaction N(1)-acetylspermine + O2 + H2O = 3-acetamidopropanal + spermidine + H2O2. The enzyme catalyses N(1)-acetylspermidine + O2 + H2O = 3-acetamidopropanal + putrescine + H2O2. The catalysed reaction is N(1),N(12)-diacetylspermine + O2 + H2O = 3-acetamidopropanal + N(1)-acetylspermidine + H2O2. It functions in the pathway amine and polyamine metabolism; spermine metabolism. Flavoenzyme which catalyzes the oxidation of N(1)-acetylspermine to spermidine and is thus involved in the polyamine back-conversion. Can also oxidize N(1)-acetylspermidine to putrescine. Substrate specificity: N(1)-acetylspermine = N(1)-acetylspermidine &gt; N(1),N(12)-diacylspermine &gt;&gt; spermine. Does not oxidize spermidine. Plays an important role in the regulation of polyamine intracellular concentration. The polypeptide is Peroxisomal N(1)-acetyl-spermine/spermidine oxidase (PAOX) (Bos taurus (Bovine)).